Consider the following 233-residue polypeptide: Thrombin-like enzyme elegaxobin-1 (233 aa).

A Peptidase S1 domain is found at 1–224 (VIGGDECNIN…HLDWIKGIIA (224 aa)). Cystine bridges form between Cys-7–Cys-138, Cys-25–Cys-41, Cys-73–Cys-231, Cys-117–Cys-185, Cys-149–Cys-164, and Cys-175–Cys-200. Residues His-40 and Asp-85 each act as charge relay system in the active site. The Charge relay system role is filled by Ser-179.

Belongs to the peptidase S1 family. Snake venom subfamily. As to quaternary structure, monomer. Expressed by the venom gland.

It localises to the secreted. In terms of biological role, thrombin-like snake venom serine protease that clots rabbit fibrinogen. Only the beta chain of fibrinogen (FGB) is cleaved, releasing fibrinopeptide B. Incubation with human fibrinogen alpha and beta resulted in cleavage of both fibrinogen chains but generated neither fibrinopeptide A nor fibrinopeptide B. Promotes clotting of rabbit fibrinogen, but not bovine or human fibrinogen. This chain is Thrombin-like enzyme elegaxobin-1, found in Protobothrops elegans (Elegant pitviper).